A 186-amino-acid polypeptide reads, in one-letter code: Peptidyl-tRNA hydrolase (186 aa).

A tRNA-binding site is contributed by Tyr-14. Catalysis depends on His-19, which acts as the Proton acceptor. Phe-64, Asn-66, and Asn-112 together coordinate tRNA.

The protein belongs to the PTH family. In terms of assembly, monomer.

The protein resides in the cytoplasm. The enzyme catalyses an N-acyl-L-alpha-aminoacyl-tRNA + H2O = an N-acyl-L-amino acid + a tRNA + H(+). Functionally, hydrolyzes ribosome-free peptidyl-tRNAs (with 1 or more amino acids incorporated), which drop off the ribosome during protein synthesis, or as a result of ribosome stalling. Its function is as follows. Catalyzes the release of premature peptidyl moieties from peptidyl-tRNA molecules trapped in stalled 50S ribosomal subunits, and thus maintains levels of free tRNAs and 50S ribosomes. This Listeria monocytogenes serovar 1/2a (strain ATCC BAA-679 / EGD-e) protein is Peptidyl-tRNA hydrolase.